The sequence spans 239 residues: Lectin (239 aa).

2 N-linked (GlcNAc...) asparagine glycosylation sites follow: Asn-17 and Asn-113.

Belongs to the leguminous lectin family. In terms of assembly, homodimer.

In terms of biological role, galactose and N-acetyllactosamine specific lectin. In Erythrina crista-galli (Cockspur coral tree), this protein is Lectin.